Reading from the N-terminus, the 157-residue chain is uncharacterized protein (157 aa).

The N-acetyltransferase domain maps to L9–T146.

This is an uncharacterized protein from Bacillus cereus (strain ZK / E33L).